Consider the following 152-residue polypeptide: TOMM20-like protein 1 (152 aa).

Over 1 to 6 the chain is Mitochondrial intermembrane; the sequence is MPSVRL. The chain crosses the membrane as a helical span at residues 7-27; it reads GVGLLAGLAAGGAVVLLSYCV. At 28–152 the chain is on the cytoplasmic side; the sequence is YLDWRRHRDP…STEHLKDDPD (125 aa).

This sequence belongs to the Tom20 family.

Its subcellular location is the mitochondrion outer membrane. This Mus musculus (Mouse) protein is TOMM20-like protein 1 (Tomm20l).